We begin with the raw amino-acid sequence, 294 residues long: Protoheme IX farnesyltransferase (294 aa).

Transmembrane regions (helical) follow at residues 8-28 (LTKP…FLIA), 35-55 (YSLF…GCVL), 81-101 (IFLN…FLFL), 107-127 (VLTI…YSLW), 133-153 (IYSI…GYCA), 163-183 (LMLL…IAIL), 209-226 (MVVY…FTVM), 230-252 (SYIF…FYGY), and 266-286 (FLLS…DHIL).

This sequence belongs to the UbiA prenyltransferase family. Protoheme IX farnesyltransferase subfamily.

It localises to the cell inner membrane. It carries out the reaction heme b + (2E,6E)-farnesyl diphosphate + H2O = Fe(II)-heme o + diphosphate. It participates in porphyrin-containing compound metabolism; heme O biosynthesis; heme O from protoheme: step 1/1. In terms of biological role, converts heme B (protoheme IX) to heme O by substitution of the vinyl group on carbon 2 of heme B porphyrin ring with a hydroxyethyl farnesyl side group. In Blochmanniella pennsylvanica (strain BPEN), this protein is Protoheme IX farnesyltransferase.